Here is a 383-residue protein sequence, read N- to C-terminus: Ribosomal RNA large subunit methyltransferase G (383 aa).

The protein belongs to the methyltransferase superfamily. RlmG family.

The protein resides in the cytoplasm. The catalysed reaction is guanosine(1835) in 23S rRNA + S-adenosyl-L-methionine = N(2)-methylguanosine(1835) in 23S rRNA + S-adenosyl-L-homocysteine + H(+). Specifically methylates the guanine in position 1835 (m2G1835) of 23S rRNA. In Vibrio atlanticus (strain LGP32) (Vibrio splendidus (strain Mel32)), this protein is Ribosomal RNA large subunit methyltransferase G.